Reading from the N-terminus, the 378-residue chain is MRLASQSAILVKVWTWNASRNAWKASGGIFDIPQKETRLKELERRLEDPSLWNDPEAARKVSQEAARLRRTVDTFRSLESDLQGLLELMEELPAEEREALKPELEEAAKKLDELYHQTLLNFPHAEKNAILTIQPGAGGTEACDWAEMLLRMYTRFAERQGFQVEVVDLTPGPEAGIDYAQILVKGENAYGLLSPEAGVHRLVRPSPFDASGRRHTSFAGVEVIPEVDEEVEVVLKPEELRIDVMRASGPGGQGVNTTDSAVRVVHLPTGITVTCQTTRSQIKNKELALKILKARLYELERKKREEELKALRGEVRPIEWGSQIRSYVLDKNYVKDHRTGLMRHDPENVLDGDLMDLIWAGLEWKAGRRQGTEEVEAE.

Glutamine 253 carries the post-translational modification N5-methylglutamine.

It belongs to the prokaryotic/mitochondrial release factor family. As to quaternary structure, interacts with the ribosome. Interacts with ribosomal protein L11. Recruited to stalled E.coli ribosomes by E.coli ArfA.

Its subcellular location is the cytoplasm. Its function is as follows. Peptide chain release factor 2 directs the termination of translation in response to the peptide chain termination codons UGA and UAA. In endogenous ribosomes interacts with P-site tRNA and 23S rRNA. In the presence of truncated mRNA in the 70S ribosome, ArfA and RF2 interact such that the GGQ peptide hydrolysis motif of RF2 rises into the peptidyl-transferase center and releases the ribosome. Recruited to stalled E.coli 70S ribosomes by E.coli ArfA, but cannot be functionally accomodated in the peptidyl-transferase center. Note T.thermophilus probably does not encode arfA. The sequence is that of Peptide chain release factor RF2 (prfB) from Thermus thermophilus (strain ATCC 27634 / DSM 579 / HB8).